The primary structure comprises 287 residues: MAEHFKQIIRCPVCLKDLEEAVQLKCGYACCLQCLNSLQKEPDGEGLLCRFCSVVSQKDDIKPKYKLRALVSIIKELEPKLKSVLTMNPRMRKFQVDMTFDVDTANNYLIISEDLRSFRSGDLSQNRKEQAERFDTALCVLGTPRFTSGRHYWEVDVGTSQVWDVGVCKESVNRQGKIVLSSEHGFLTVGCREGKVFAASTVPMTPLWVSPQLHRVGIFLDVGMRSIAFYNVSDGCHIYTFIEIPVCEPWRPFFAHKRGSQDDQSILSICSVINPSAASAPVSSEGK.

The RING-type; degenerate zinc-finger motif lies at 11–53; it reads CPVCLKDLEEAVQLKCGYACCLQCLNSLQKEPDGEGLLCRFCS. Residues 78 to 276 enclose the B30.2/SPRY domain; the sequence is EPKLKSVLTM…LSICSVINPS (199 aa).

In terms of assembly, interacts with PSMB1, UBE2A and CCNB1.

It localises to the cytoplasm. The protein resides in the nucleus. This Homo sapiens (Human) protein is Ret finger protein-like 4A (RFPL4A).